Consider the following 423-residue polypeptide: F-box protein At1g52495 (423 aa).

The F-box domain occupies 49–95 (KLKDVHLPLDLIVEILKKLPTKSLMRFRCVSKPWSFIISKRRDFVES).

In Arabidopsis thaliana (Mouse-ear cress), this protein is F-box protein At1g52495.